Consider the following 395-residue polypeptide: Protein SGT1 (395 aa).

Lys32 participates in a covalent cross-link: Glycyl lysine isopeptide (Lys-Gly) (interchain with G-Cter in ubiquitin). Residues 137-175 are disordered; sequence KKNKKQKDSTNKHTIKPVESIENRGDNNSSHSPISPLKI. Phosphoserine occurs at positions 168 and 171. Residues 182–277 enclose the CS domain; it reads SPKFKIDWYQ…IDSTQWKKLE (96 aa). An SGS domain is found at 312–395; it reads SYPSSSKKKI…PPEGMEPKHW (84 aa). The tract at residues 373–395 is disordered; the sequence is DWEDVSKGTVKTSPPEGMEPKHW.

The protein belongs to the SGT1 family. In terms of assembly, interacts with SKP1/CBF3D. Part of SCF E3 ubiquitin ligase complexes containing SKP1, CDC53, HRT1 and some F-box proteins. Interacts with CIR1/CDC35.

Its function is as follows. Involved in ubiquitination and subsequent proteasomal degradation of target proteins. Required for both entry into S phase and kinetochore function. Also involved in cyclic AMP (cAMP) pathway, possibly by participating in the assembly or the conformational activation of specific multiprotein complexes. In Saccharomyces cerevisiae (strain ATCC 204508 / S288c) (Baker's yeast), this protein is Protein SGT1.